The primary structure comprises 249 residues: uncharacterized protein (249 aa).

11–34 (IFGGRSQIGGELARRLAAGATMVL) is a binding site for NADP(+). Position 142 (Ser-142) interacts with substrate. The Proton acceptor role is filled by Tyr-155.

Belongs to the short-chain dehydrogenases/reductases (SDR) family.

This is an uncharacterized protein from Mycobacterium tuberculosis (strain CDC 1551 / Oshkosh).